Reading from the N-terminus, the 238-residue chain is Sugar fermentation stimulation protein homolog (238 aa).

This sequence belongs to the SfsA family.

The protein is Sugar fermentation stimulation protein homolog of Brucella abortus (strain S19).